The sequence spans 82 residues: Small ribosomal subunit protein bS16 (82 aa).

This sequence belongs to the bacterial ribosomal protein bS16 family.

The protein is Small ribosomal subunit protein bS16 of Clostridium botulinum (strain Okra / Type B1).